Here is a 176-residue protein sequence, read N- to C-terminus: Protein GrpE (176 aa).

A disordered region spans residues 1 to 31 (MSEQKQEFENENAENSEHLQDENLQNIEDVE).

The protein belongs to the GrpE family. Homodimer.

It is found in the cytoplasm. In terms of biological role, participates actively in the response to hyperosmotic and heat shock by preventing the aggregation of stress-denatured proteins, in association with DnaK and GrpE. It is the nucleotide exchange factor for DnaK and may function as a thermosensor. Unfolded proteins bind initially to DnaJ; upon interaction with the DnaJ-bound protein, DnaK hydrolyzes its bound ATP, resulting in the formation of a stable complex. GrpE releases ADP from DnaK; ATP binding to DnaK triggers the release of the substrate protein, thus completing the reaction cycle. Several rounds of ATP-dependent interactions between DnaJ, DnaK and GrpE are required for fully efficient folding. The chain is Protein GrpE from Campylobacter jejuni subsp. doylei (strain ATCC BAA-1458 / RM4099 / 269.97).